The chain runs to 467 residues: A-type ATP synthase subunit B (467 aa).

Positions 95-114 (GKGQPRDHMPLPPPEDFRDV) are disordered.

It belongs to the ATPase alpha/beta chains family. In terms of assembly, has multiple subunits with at least A(3), B(3), C, D, E, F, H, I and proteolipid K(x).

It is found in the cell membrane. Functionally, component of the A-type ATP synthase that produces ATP from ADP in the presence of a proton gradient across the membrane. The B chain is a regulatory subunit. The polypeptide is A-type ATP synthase subunit B (Pyrobaculum aerophilum (strain ATCC 51768 / DSM 7523 / JCM 9630 / CIP 104966 / NBRC 100827 / IM2)).